The sequence spans 315 residues: Homoserine kinase (315 aa).

97-107 (PPARGLGSSAT) is a binding site for ATP.

It belongs to the GHMP kinase family. Homoserine kinase subfamily.

The protein localises to the cytoplasm. It carries out the reaction L-homoserine + ATP = O-phospho-L-homoserine + ADP + H(+). It participates in amino-acid biosynthesis; L-threonine biosynthesis; L-threonine from L-aspartate: step 4/5. Catalyzes the ATP-dependent phosphorylation of L-homoserine to L-homoserine phosphate. The sequence is that of Homoserine kinase from Synechococcus sp. (strain WH7803).